The sequence spans 120 residues: ATP-dependent Clp protease adapter protein ClpS (120 aa).

Belongs to the ClpS family. As to quaternary structure, binds to the N-terminal domain of the chaperone ClpA.

Functionally, involved in the modulation of the specificity of the ClpAP-mediated ATP-dependent protein degradation. In Pseudomonas syringae pv. tomato (strain ATCC BAA-871 / DC3000), this protein is ATP-dependent Clp protease adapter protein ClpS.